A 325-amino-acid polypeptide reads, in one-letter code: Aspartate carbamoyltransferase catalytic subunit (325 aa).

Arg-64 and Thr-65 together coordinate carbamoyl phosphate. Lys-92 contacts L-aspartate. Carbamoyl phosphate-binding residues include Arg-114, His-142, and Gln-145. Residues Arg-176 and Arg-230 each coordinate L-aspartate. Residues Gly-271 and Pro-272 each coordinate carbamoyl phosphate.

The protein belongs to the aspartate/ornithine carbamoyltransferase superfamily. ATCase family. As to quaternary structure, heterododecamer (2C3:3R2) of six catalytic PyrB chains organized as two trimers (C3), and six regulatory PyrI chains organized as three dimers (R2).

The enzyme catalyses carbamoyl phosphate + L-aspartate = N-carbamoyl-L-aspartate + phosphate + H(+). The protein operates within pyrimidine metabolism; UMP biosynthesis via de novo pathway; (S)-dihydroorotate from bicarbonate: step 2/3. In terms of biological role, catalyzes the condensation of carbamoyl phosphate and aspartate to form carbamoyl aspartate and inorganic phosphate, the committed step in the de novo pyrimidine nucleotide biosynthesis pathway. The chain is Aspartate carbamoyltransferase catalytic subunit from Nitratidesulfovibrio vulgaris (strain DSM 19637 / Miyazaki F) (Desulfovibrio vulgaris).